We begin with the raw amino-acid sequence, 451 residues long: Exodeoxyribonuclease 7 large subunit (451 aa).

It belongs to the XseA family. Heterooligomer composed of large and small subunits.

Its subcellular location is the cytoplasm. It carries out the reaction Exonucleolytic cleavage in either 5'- to 3'- or 3'- to 5'-direction to yield nucleoside 5'-phosphates.. Its function is as follows. Bidirectionally degrades single-stranded DNA into large acid-insoluble oligonucleotides, which are then degraded further into small acid-soluble oligonucleotides. This chain is Exodeoxyribonuclease 7 large subunit, found in Neisseria meningitidis serogroup C / serotype 2a (strain ATCC 700532 / DSM 15464 / FAM18).